A 677-amino-acid chain; its full sequence is MDFPGHFEQIFQQLNYQRLHGQLCDCVIVVGNRHFKAHRSVLAACSTHFRALFSVAEGDQTMNMIQLDSEVVTAEAFAALIDMMYTSTLMLGESNVMDVLLAASHLHLNSVVKACKHYLTTRTLPMSPPSERVQEQSARMQRSFMLQQLGLSIVSSALNSSQNGEEQPAPMSSSMRSNLDQRTPFPMRRLHKRKQSAEERARQRLRPSIDESAISDVTPENGPSGVHSREEFFSPDSLKIVDNPKADGMTDNQEDSAIMFDQSFGTQEDAQVPSQSDNSAGNMAQLSMASRATQVETSFDQEAAPEKSSFQCENPEVGLGEKEHMRVVVKSEPLSSPEPQDEVSDVTSQAEGSESVEVEGVVVSAEKIDLSPESSDRSFSDPQSSTDRVGDIHILEVTNNLEHKSTFSISNFLNKSRGNNFTANQNNDDNIPNTTSDCRLESEAPYLLSPEAGPAGGPSSAPGSHVENPFSEPADSHFVRPMQEVMGLPCVQTSGYQGGEQFGMDFSRSGLGLHSSFSRVMIGSPRGGASNFPYYRRIAPKMPVVTSVRSSQIPENSTSSQLMMNGATSSFENGHPSQPGPPQLTRASADVLSKCKKALSEHNVLVVEGARKYACKICCKTFLTLTDCKKHIRVHTGEKPYACLKCGKRFSQSSHLYKHSKTTCLRWQSSNLPSTLL.

The BTB domain occupies 24–93 (CDCVIVVGNR…MYTSTLMLGE (70 aa)). Positions 158–181 (LNSSQNGEEQPAPMSSSMRSNLDQ) are enriched in polar residues. 2 disordered regions span residues 158-252 (LNSS…MTDN) and 287-312 (SMAS…SFQC). At Ser234 the chain carries Phosphoserine. A Glycyl lysine isopeptide (Lys-Gly) (interchain with G-Cter in SUMO2) cross-link involves residue Lys239. Residues 287–300 (SMASRATQVETSFD) are compositionally biased toward polar residues. Glycyl lysine isopeptide (Lys-Gly) (interchain with G-Cter in SUMO2) cross-links involve residues Lys322 and Lys330. The disordered stretch occupies residues 331-387 (SEPLSSPEPQDEVSDVTSQAEGSESVEVEGVVVSAEKIDLSPESSDRSFSDPQSSTD). A compositionally biased stretch (low complexity) spans 350-365 (AEGSESVEVEGVVVSA). The span at 366–379 (EKIDLSPESSDRSF) shows a compositional bias: basic and acidic residues. Ser371 bears the Phosphoserine mark. Glycyl lysine isopeptide (Lys-Gly) (interchain with G-Cter in SUMO2) cross-links involve residues Lys404 and Lys415. Positions 447–474 (LLSPEAGPAGGPSSAPGSHVENPFSEPA) are disordered. A compositionally biased stretch (low complexity) spans 449-464 (SPEAGPAGGPSSAPGS). Lys541 participates in a covalent cross-link: Glycyl lysine isopeptide (Lys-Gly) (interchain with G-Cter in SUMO2). The segment covering 552-576 (QIPENSTSSQLMMNGATSSFENGHP) has biased composition (polar residues). Residues 552–585 (QIPENSTSSQLMMNGATSSFENGHPSQPGPPQLT) form a disordered region. Residues Lys594 and Lys597 each participate in a glycyl lysine isopeptide (Lys-Gly) (interchain with G-Cter in SUMO2) cross-link. The segment at 613–635 (YACKICCKTFLTLTDCKKHIRVH) adopts a C2H2-type 1 zinc-finger fold. The C2H2-type 2; atypical zinc-finger motif lies at 641 to 664 (YACLKCGKRFSQSSHLYKHSKTTC). Residues Lys645 and Lys658 each participate in a glycyl lysine isopeptide (Lys-Gly) (interchain with G-Cter in SUMO2) cross-link.

Its subcellular location is the nucleus. In terms of biological role, may be involved in transcriptional regulation. This is Zinc finger and BTB domain-containing protein 5 (ZBTB5) from Homo sapiens (Human).